A 507-amino-acid chain; its full sequence is Aromatase (507 aa).

Cys436 contributes to the heme binding site.

The protein belongs to the cytochrome P450 family. It depends on heme as a cofactor.

It localises to the membrane. It carries out the reaction testosterone + 3 reduced [NADPH--hemoprotein reductase] + 3 O2 = 17beta-estradiol + formate + 3 oxidized [NADPH--hemoprotein reductase] + 4 H2O + 4 H(+). The enzyme catalyses androst-4-ene-3,17-dione + 3 reduced [NADPH--hemoprotein reductase] + 3 O2 = estrone + formate + 3 oxidized [NADPH--hemoprotein reductase] + 4 H2O + 4 H(+). Its function is as follows. Catalyzes the formation of aromatic C18 estrogens from C19 androgens. This Gallus gallus (Chicken) protein is Aromatase (CYP19A1).